Consider the following 632-residue polypeptide: MTTAAHAETLGFQTEVKQLLQLMIHSLYSNREIFLRELISNAADACDKLRYEALENDTLYGDDSELRIEIEHDAEAGTVTVRDNGIGMSRDEVIQNLGTIARSGTAEFLQQLSGEKQKDAKLIGQFGVGFYSGFIVSDEITVRTRRVDQEQGVQWHSRGEGEFDIADIDKPERGTEIVLHLKEDAKEFADAERLKHLVRTYSDHIEVPVRMPKVEKAHDEEGNEIEGSETVTWETVNEATALWVRPKEEISDDEYKAFYKHVAHDFSDPLTWSHNKVEGKLEYTSLLYVPGRAPFDLYQREGVRGLKLYVQRVFIMDDAEQFLPLYLRFIKGVVDSKDLSLNVSRELLQKDPQVDKLKSALTKRSLDMLKKLAKDEEAYQTFWNAFGNVLKEGPAEDFANRDKIADLLRFSSTQTDSATQDQSLAGYVSRMKEGQQKIYYLVADGFNAASHSPHLEIFRKKGIEVLLLHDRIDEWLMSHLTEYDGKAFADVAKGDLDLDDMADEEEKKAQEETAKAKAPLIERVKTALGDEVQEVRITHRLTDSPACVVLSEHDMGYQMRRLMEAAGQPLPEVKPILELNPEHSLVARLEGADDSVFNDLARILLDQAIIAEGGHLEDPATYVQRLNKLLSH.

Positions 1–345 are a; substrate-binding; sequence MTTAAHAETL…SKDLSLNVSR (345 aa). Residues 346–561 are b; it reads ELLQKDPQVD…EHDMGYQMRR (216 aa). Positions 562 to 632 are c; sequence LMEAAGQPLP…VQRLNKLLSH (71 aa).

Belongs to the heat shock protein 90 family. As to quaternary structure, homodimer.

It is found in the cytoplasm. Molecular chaperone. Has ATPase activity. The chain is Chaperone protein HtpG from Chromohalobacter salexigens (strain ATCC BAA-138 / DSM 3043 / CIP 106854 / NCIMB 13768 / 1H11).